Reading from the N-terminus, the 162-residue chain is Blue copper protein 1b (162 aa).

A signal peptide spans 1-23 (MASSRVVLILSISMVLLSSVAIA). In terms of domain architecture, Phytocyanin spans 25–125 (TDYIVGDDKG…QMKLVITVLA (101 aa)). Cu cation is bound at residue histidine 65. N-linked (GlcNAc...) asparagine glycosylation occurs at asparagine 71. Cysteine 78 and cysteine 112 are joined by a disulfide. Cu cation is bound by residues cysteine 106, histidine 111, and methionine 117. The chain crosses the membrane as a helical span at residues 142–162 (VVSSLFGVVMAIMVAIAVIFA).

The protein resides in the membrane. In Medicago truncatula (Barrel medic), this protein is Blue copper protein 1b.